The primary structure comprises 1455 residues: DNA polymerase II large subunit (1455 aa).

The segment at 1409 to 1440 (GLLENLSNGSKKTEKAEKAEKPRKKSDEKPKK) is disordered. Over residues 1419–1438 (KKTEKAEKAEKPRKKSDEKP) the composition is skewed to basic and acidic residues.

Belongs to the archaeal DNA polymerase II family. As to quaternary structure, heterodimer of a large subunit and a small subunit. This protein undergoes a protein self splicing that involves a post-translational excision of the intervening region (intein) followed by peptide ligation.

The catalysed reaction is DNA(n) + a 2'-deoxyribonucleoside 5'-triphosphate = DNA(n+1) + diphosphate. The enzyme catalyses Exonucleolytic cleavage in the 3'- to 5'-direction to yield nucleoside 5'-phosphates.. In terms of biological role, possesses two activities: a DNA synthesis (polymerase) and an exonucleolytic activity that degrades single-stranded DNA in the 3'- to 5'-direction. Has a template-primer preference which is characteristic of a replicative DNA polymerase. The sequence is that of DNA polymerase II large subunit (polC) from Pyrococcus abyssi (strain GE5 / Orsay).